The primary structure comprises 698 residues: Elongation factor G (698 aa).

The tr-type G domain maps to 8-290; sequence ERYRNIGISA…AVIEFLPSPV (283 aa). GTP-binding positions include 17 to 24, 88 to 92, and 142 to 145; these read AHIDAGKT, DTPGH, and NKMD.

The protein belongs to the TRAFAC class translation factor GTPase superfamily. Classic translation factor GTPase family. EF-G/EF-2 subfamily.

It localises to the cytoplasm. In terms of biological role, catalyzes the GTP-dependent ribosomal translocation step during translation elongation. During this step, the ribosome changes from the pre-translocational (PRE) to the post-translocational (POST) state as the newly formed A-site-bound peptidyl-tRNA and P-site-bound deacylated tRNA move to the P and E sites, respectively. Catalyzes the coordinated movement of the two tRNA molecules, the mRNA and conformational changes in the ribosome. In Azoarcus sp. (strain BH72), this protein is Elongation factor G.